Reading from the N-terminus, the 804-residue chain is DNA gyrase subunit A (804 aa).

Residues 31–495 form the Topo IIA-type catalytic domain; it reads IPDVRDGLKP…QSIEYNEEEL (465 aa). Tyr119 acts as the O-(5'-phospho-DNA)-tyrosine intermediate in catalysis. A GyrA-box motif is present at residues 522 to 528; it reads QKRGGKG.

This sequence belongs to the type II topoisomerase GyrA/ParC subunit family. In terms of assembly, heterotetramer, composed of two GyrA and two GyrB chains. In the heterotetramer, GyrA contains the active site tyrosine that forms a transient covalent intermediate with DNA, while GyrB binds cofactors and catalyzes ATP hydrolysis.

It is found in the cytoplasm. It catalyses the reaction ATP-dependent breakage, passage and rejoining of double-stranded DNA.. Functionally, a type II topoisomerase that negatively supercoils closed circular double-stranded (ds) DNA in an ATP-dependent manner to modulate DNA topology and maintain chromosomes in an underwound state. Negative supercoiling favors strand separation, and DNA replication, transcription, recombination and repair, all of which involve strand separation. Also able to catalyze the interconversion of other topological isomers of dsDNA rings, including catenanes and knotted rings. Type II topoisomerases break and join 2 DNA strands simultaneously in an ATP-dependent manner. In Thermotoga maritima (strain ATCC 43589 / DSM 3109 / JCM 10099 / NBRC 100826 / MSB8), this protein is DNA gyrase subunit A.